A 323-amino-acid chain; its full sequence is Homoserine kinase (323 aa).

Residue 97 to 107 (PHGRGMGSSGA) participates in ATP binding.

Belongs to the GHMP kinase family. Homoserine kinase subfamily.

It is found in the cytoplasm. It carries out the reaction L-homoserine + ATP = O-phospho-L-homoserine + ADP + H(+). The protein operates within amino-acid biosynthesis; L-threonine biosynthesis; L-threonine from L-aspartate: step 4/5. Its function is as follows. Catalyzes the ATP-dependent phosphorylation of L-homoserine to L-homoserine phosphate. This Leifsonia xyli subsp. xyli (strain CTCB07) protein is Homoserine kinase.